A 134-amino-acid polypeptide reads, in one-letter code: Complexin-1 (134 aa).

The segment at 1 to 112 is disordered; sequence MEFVMKQALG…PGCGDAAEEE (112 aa). A compositionally biased stretch (basic and acidic residues) spans 15–81; the sequence is DMGKMLGGDE…IKKKEEREAE (67 aa). Residues 29–69 are a coiled coil; that stretch reads DAAKKEEERQEALRQEEEERKAKYAKMEAEREAVRQGIRDK. The interval 48-70 is interaction with the SNARE complex; sequence RKAKYAKMEAEREAVRQGIRDKY.

It belongs to the complexin/synaphin family. Binds to the SNARE core complex containing SNAP25, VAMP2 and STX1A.

The protein resides in the cytoplasm. It is found in the cytosol. It localises to the perikaryon. The protein localises to the presynapse. Functionally, positively regulates a late step in synaptic vesicle exocytosis. Organizes the SNAREs into a cross-linked zigzag topology that, when interposed between the vesicle and plasma membranes, is incompatible with fusion, thereby preventing SNAREs from releasing neurotransmitters until an action potential arrives at the synapse. Also involved in glucose-induced secretion of insulin by pancreatic beta-cells. This Bos taurus (Bovine) protein is Complexin-1 (CPLX1).